A 191-amino-acid chain; its full sequence is Protein HP-20 homolog (191 aa).

Positions 1–16 (MADLRILVSIILMTNA) are cleaved as a signal peptide. A Collagen-like domain is found at 22–58 (GCTGPPGPPGHPGPPGIRGPPGIRGIPGLPGPPGTPG). A disordered region spans residues 22-61 (GCTGPPGPPGHPGPPGIRGPPGIRGIPGLPGPPGTPGPSV). Residues 26–39 (PPGPPGHPGPPGIR) show a composition bias toward pro residues. Positions 64–191 (PCHRQSAFTV…VTIYFSGFLT (128 aa)) constitute a C1q domain.

It is found in the secreted. This chain is Protein HP-20 homolog, found in Bos taurus (Bovine).